Reading from the N-terminus, the 257-residue chain is Uroporphyrinogen-III C-methyltransferase (257 aa).

S-adenosyl-L-homocysteine-binding positions include proline 11, 87 to 89, 117 to 118, and methionine 170; these read GGD and TS.

Belongs to the precorrin methyltransferase family.

It catalyses the reaction uroporphyrinogen III + 2 S-adenosyl-L-methionine = precorrin-2 + 2 S-adenosyl-L-homocysteine + H(+). Its pathway is cofactor biosynthesis; adenosylcobalamin biosynthesis; precorrin-2 from uroporphyrinogen III: step 1/1. It functions in the pathway porphyrin-containing compound metabolism; siroheme biosynthesis; precorrin-2 from uroporphyrinogen III: step 1/1. Its function is as follows. Catalyzes the two successive C-2 and C-7 methylation reactions involved in the conversion of uroporphyrinogen III to precorrin-2 via the intermediate formation of precorrin-1. It is a step in the biosynthesis of both cobalamin (vitamin B12) and siroheme. The polypeptide is Uroporphyrinogen-III C-methyltransferase (sumT) (Bacillus subtilis (strain 168)).